The primary structure comprises 558 residues: NAD-dependent malic enzyme 2 (558 aa).

The Proton donor role is filled by Tyr101. Residue Arg154 coordinates NAD(+). Lys172 serves as the catalytic Proton acceptor. 3 residues coordinate a divalent metal cation: Glu243, Asp244, and Asp267. The NAD(+) site is built by Asp267 and Asn411.

The protein belongs to the malic enzymes family. In terms of assembly, homotetramer. Mg(2+) serves as cofactor. Requires Mn(2+) as cofactor.

The enzyme catalyses (S)-malate + NAD(+) = pyruvate + CO2 + NADH. It catalyses the reaction oxaloacetate + H(+) = pyruvate + CO2. The polypeptide is NAD-dependent malic enzyme 2 (Photobacterium profundum (strain SS9)).